The following is a 448-amino-acid chain: Dual specificity mitogen-activated protein kinase kinase 5 (448 aa).

The segment at 18–25 (VIRIKIPN) is interaction with MAPK7. A PB1 domain is found at 18 to 109 (VIRIKIPNSG…EPLQIFPRAC (92 aa)). Residues 64-68 (DEDGD) are interaction with MAP3K2/MAP3K3. The disordered stretch occupies residues 116–144 (NIHGLKVNTRAGPSQHTSPVVSDSLPSNS). Residues 117–131 (IHGLKVNTRAGPSQH) are interaction with MAPK7. Residues 126 to 144 (AGPSQHTSPVVSDSLPSNS) are compositionally biased toward polar residues. In terms of domain architecture, Protein kinase spans 166-419 (IRYRDTLGHG…PEELMGHPFI (254 aa)). ATP is bound by residues 172-180 (LGHGNGGTV) and Lys195. The Proton acceptor role is filled by Asp283. Residue Ser311 is modified to Phosphoserine. Thr315 is modified (phosphothreonine).

Belongs to the protein kinase superfamily. STE Ser/Thr protein kinase family. MAP kinase kinase subfamily. In terms of assembly, interacts with PARD6A, MAP3K3 and MAPK7. Forms a complex with SQSTM1 and PRKCZ or PRKCI. Mg(2+) is required as a cofactor. In terms of processing, activated by phosphorylation on Ser/Thr by MAP kinase kinase kinases. Expressed in the liver and brain (at protein level). As to expression, expressed in the liver, muscle, testes, lung, kidney, spleen, heart and brain (at protein level).

It localises to the cytoplasm. It is found in the cytosol. Its subcellular location is the membrane. The catalysed reaction is L-seryl-[protein] + ATP = O-phospho-L-seryl-[protein] + ADP + H(+). It catalyses the reaction L-threonyl-[protein] + ATP = O-phospho-L-threonyl-[protein] + ADP + H(+). It carries out the reaction L-tyrosyl-[protein] + ATP = O-phospho-L-tyrosyl-[protein] + ADP + H(+). Its function is as follows. Acts as a scaffold for the formation of a ternary MAP3K2/MAP3K3-MAP3K5-MAPK7 signaling complex. Activation of this pathway appears to play a critical role in protecting cells from stress-induced apoptosis, neuronal survival and cardiac development and angiogenesis. As part of the MAPK/ERK signaling pathway, acts as a negative regulator of apoptosis in cardiomyocytes via promotion of STUB1/CHIP-mediated ubiquitination and degradation of ICER-type isoforms of CREM. This Rattus norvegicus (Rat) protein is Dual specificity mitogen-activated protein kinase kinase 5 (Map2k5).